The chain runs to 149 residues: Transcriptional repressor NrdR (149 aa).

A zinc finger spans residues 3 to 34 (CPFCSAVDTKVIDSRLVAEGHQVRRRRECLLC). The 91-residue stretch at 49 to 139 (PRVIKSNGSR…VYRSFEDIRE (91 aa)) folds into the ATP-cone domain.

The protein belongs to the NrdR family. Zn(2+) serves as cofactor.

In terms of biological role, negatively regulates transcription of bacterial ribonucleotide reductase nrd genes and operons by binding to NrdR-boxes. The polypeptide is Transcriptional repressor NrdR (Aeromonas hydrophila subsp. hydrophila (strain ATCC 7966 / DSM 30187 / BCRC 13018 / CCUG 14551 / JCM 1027 / KCTC 2358 / NCIMB 9240 / NCTC 8049)).